Reading from the N-terminus, the 115-residue chain is Large ribosomal subunit protein P2 (115 aa).

N-acetylmethionine is present on Met1. 2 positions are modified to phosphoserine: Ser17 and Ser19. Lys21 carries the N6-acetyllysine; alternate modification. The residue at position 21 (Lys21) is an N6-succinyllysine; alternate. Residues Ala76–Ala90 are compositionally biased toward low complexity. The interval Ala76–Asp115 is disordered. 2 positions are modified to phosphoserine: Ser79 and Ser86. Over residues Ala91–Glu101 the composition is skewed to basic and acidic residues. Phosphoserine is present on residues Ser102 and Ser105.

The protein belongs to the eukaryotic ribosomal protein P1/P2 family. As to quaternary structure, heterodimer with RPLP1 at the lateral ribosomal stalk of the large ribosomal subunit.

Its function is as follows. Plays an important role in the elongation step of protein synthesis. This Equus caballus (Horse) protein is Large ribosomal subunit protein P2 (RPLP2).